The following is a 53-amino-acid chain: Collagen alpha-1(I) chain (53 aa).

The tract at residues 1–53 (SYGYBZKSAGVSVPGPMGPSGPRGLPGPPGAPGPZGFZGPPGZPGZPGSSGPM) is disordered. Lys7 is modified (allysine). Ser8 is modified (phosphoserine). The span at 10–23 (GVSVPGPMGPSGPR) shows a compositional bias: low complexity. Pro26, Pro29, Pro32, Pro41, Pro44, and Pro47 each carry 4-hydroxyproline. Residues 34-53 (PZGFZGPPGZPGZPGSSGPM) show a composition bias toward low complexity.

It belongs to the fibrillar collagen family. In terms of assembly, trimers of one alpha 2(I) and two alpha 1(I) chains. Interacts with MRC2. Interacts with TRAM2. Interacts with MFAP4 in a Ca (2+)-dependent manner. Post-translationally, contains mostly 4-hydroxyproline. Proline residues at the third position of the tripeptide repeating unit (G-X-Y) are hydroxylated in some or all of the chains. In terms of processing, contains 3-hydroxyproline at a few sites. This modification occurs on the first proline residue in the sequence motif Gly-Pro-Hyp, where Hyp is 4-hydroxyproline. Lysine residues at the third position of the tripeptide repeating unit (G-X-Y) are 5-hydroxylated in some or all of the chains. Post-translationally, O-glycosylated on hydroxylated lysine residues. The O-linked glycan consists of a Glc-Gal disaccharide. In terms of tissue distribution, forms the fibrils of tendon, ligaments and bones. In bones the fibrils are mineralized with calcium hydroxyapatite.

Its subcellular location is the secreted. The protein resides in the extracellular space. The protein localises to the extracellular matrix. Its function is as follows. Type I collagen is a member of group I collagen (fibrillar forming collagen). The protein is Collagen alpha-1(I) chain (COL1A1) of Oryctolagus cuniculus (Rabbit).